The primary structure comprises 714 residues: Penicillin-binding protein 1F (714 aa).

Residues 1 to 12 (MFKIKKKKLFIP) are Cytoplasmic-facing. The helical; Signal-anchor for type II membrane protein transmembrane segment at 13–33 (IIILVLTAFLALIGYISIIFL) threads the bilayer. Residues 34–714 (GHYVIDEKKL…DYVQPKLFSS (681 aa)) are Extracellular-facing. Residues 49–217 (SKIVDQNGDE…STYSPILHPD (169 aa)) are transglycosylase. Catalysis depends on glutamate 87, which acts as the Proton donor; for transglycosylase activity. The transpeptidase stretch occupies residues 297–592 (SKLQKTAYQV…SSYPTRLFKD (296 aa)). Serine 359 functions as the Acyl-ester intermediate; for transpeptidase activity in the catalytic mechanism.

The protein in the N-terminal section; belongs to the glycosyltransferase 51 family. This sequence in the C-terminal section; belongs to the transpeptidase family.

The protein localises to the cell membrane. It carries out the reaction [GlcNAc-(1-&gt;4)-Mur2Ac(oyl-L-Ala-gamma-D-Glu-L-Lys-D-Ala-D-Ala)](n)-di-trans,octa-cis-undecaprenyl diphosphate + beta-D-GlcNAc-(1-&gt;4)-Mur2Ac(oyl-L-Ala-gamma-D-Glu-L-Lys-D-Ala-D-Ala)-di-trans,octa-cis-undecaprenyl diphosphate = [GlcNAc-(1-&gt;4)-Mur2Ac(oyl-L-Ala-gamma-D-Glu-L-Lys-D-Ala-D-Ala)](n+1)-di-trans,octa-cis-undecaprenyl diphosphate + di-trans,octa-cis-undecaprenyl diphosphate + H(+). It catalyses the reaction Preferential cleavage: (Ac)2-L-Lys-D-Ala-|-D-Ala. Also transpeptidation of peptidyl-alanyl moieties that are N-acyl substituents of D-alanine.. The protein operates within cell wall biogenesis; peptidoglycan biosynthesis. Functionally, cell wall formation. May be involved in outgrowth of the germinated spore or it could function in the synthesis of the germ cell wall. This chain is Penicillin-binding protein 1F (pbpF), found in Bacillus subtilis (strain 168).